A 97-amino-acid polypeptide reads, in one-letter code: Mapk-regulated corepressor-interacting protein 1 (97 aa).

Polar residues predominate over residues 1 to 26 (MTSSSTPRMHTYKRTSSPRSPTNTGE). 2 disordered regions span residues 1–27 (MTSSSTPRMHTYKRTSSPRSPTNTGEL) and 54–97 (QNHE…SKKS). 2 stretches are compositionally biased toward basic and acidic residues: residues 54–68 (QNHERNDRGPQEYVE) and 84–97 (SDLKKRNTQDSKKS). Positions 80–84 (PVDLS) match the PXDLS motif motif.

The protein belongs to the MCRIP family.

It is found in the nucleus. It localises to the cytoplasm. The protein resides in the stress granule. Its function is as follows. May play a role in the regulation of the epithelial-mesenchymal transition. This Danio rerio (Zebrafish) protein is Mapk-regulated corepressor-interacting protein 1 (mcrip1).